We begin with the raw amino-acid sequence, 78 residues long: Beta-defensin 29 (78 aa).

The first 23 residues, 1–23 (MPVTKSYFMTVVVVLILVDETTG), serve as a signal peptide directing secretion. 3 disulfides stabilise this stretch: C40–C67, C47–C61, and C51–C68.

The protein belongs to the beta-defensin family. Highly expressed in the cauda epididymis.

The protein localises to the secreted. Functionally, has antibacterial activity. The sequence is that of Beta-defensin 29 (Defb29) from Mus musculus (Mouse).